The sequence spans 615 residues: Neurosecretory protein VGF (615 aa).

The signal sequence occupies residues 1–22; sequence MKALRLSASALFCLLLINGLGA. Disordered stretches follow at residues 22–201 and 218–257; these read AAPP…ESPG and PERA…PKTH. Pro residues-rich tracts occupy residues 25–35 and 129–141; these read PGRPEAQPPPL and PESP…PRPQ. The segment covering 179–194 has biased composition (low complexity); the sequence is ETAAAETETRTHTLTR. Q310 is subject to Pyrrolidone carboxylic acid. Residues 342-600 are disordered; it reads RQRGLGGRGL…EAEERRLQEQ (259 aa). Acidic residues predominate over residues 378–394; sequence VGEEDEEAAEAEAEAEE. Basic and acidic residues predominate over residues 415-433; the sequence is AEDKRSQEETPGHRRKEAE. S420 carries the post-translational modification Phosphoserine; by FAM20C. Phosphothreonine; by FAM20C is present on T424. Acidic residues predominate over residues 434 to 448; sequence GTEEGGEEEDDEEMD. The span at 487 to 497 shows a compositional bias: pro residues; it reads PPEPVPPPRAA. Residue P577 is modified to Proline amide. Basic and acidic residues predominate over residues 577-599; the sequence is PGREAQARRAQEEAEAEERRLQE.

As to quaternary structure, interacts with HSPA8 on cell membrane. Interacts with C3AR1. Interacts with C1QBP. Multiple peptides are derived from VGF, with activities in synaptic plasticity, antidepression, penile erection, autonomic activation, and increases in energy expenditure. Central and peripheral nervous systems, synthesized exclusively in neuronal and neuroendocrine cells.

Its subcellular location is the secreted. It is found in the cytoplasmic vesicle. The protein resides in the secretory vesicle. Functionally, secreted polyprotein that is packaged and proteolytically processed by prohormone convertases PCSK1 and PCSK2 in a cell-type-specific manner. VGF and peptides derived from its processing play many roles in neurogenesis and neuroplasticity associated with learning, memory, depression and chronic pain. In terms of biological role, plays a role in the control of body fluid homeostasis by regulating vasopressin release. Suppresses presynaptic glutamatergic neurons connected to vasopressin neurons. Plays a role in the control of body fluid homeostasis by regulating vasopressin release. Activates GABAergic interneurons which are inhibitory neurons of the nervous system and thereby suppresses presynaptic glutamatergic neurons. Also stimulates feeding behavior in an orexin-dependent manner in the hypothalamus. Functions as a positive regulator for the activation of orexin neurons resulting in elevated gastric acid secretion and gastric emptying. Its function is as follows. Secreted multifunctional neuropeptide that binds to different cell receptors and thereby plays multiple physiological roles including modulation of energy expenditure, pain, response to stress, gastric regulation, glucose homeostasis as well as lipolysis. Activates the G-protein-coupled receptor C3AR1 via a folding-upon-binding mechanism leading to enhanced lipolysis in adipocytes. Interacts with C1QBP receptor in macrophages and microglia causing increased levels of intracellular calcium and hypersensitivity. Functionally, plays a role in the regulation of memory formation and depression-related behaviors potentially by influencing synaptic plasticity and neurogenesis. Induces acute and transient activation of the NTRK2/TRKB receptor and subsequent CREB phosphorylation. Also induces insulin secretion in insulinoma cells by increasing intracellular calcium mobilization. In terms of biological role, has bactericidal activity against M.luteus, and antifungal activity against P. Pastoris. The sequence is that of Neurosecretory protein VGF (VGF) from Homo sapiens (Human).